The sequence spans 183 residues: Caltractin ICL1c (183 aa).

The interval M1–E30 is disordered. EF-hand domains follow at residues E39–E74, A75–E110, D112–T147, and M148–A183. Residues D52, D54, T56, S58, E63, D88, D90, S92, Q94, and E99 each coordinate Ca(2+).

This sequence belongs to the centrin family. Monomer.

Its subcellular location is the cytoplasm. The protein resides in the cytoskeleton. In terms of biological role, plays a fundamental role in microtubule organizing center structure and function. Component of the infraciliary lattice (ICL) and the ciliary basal bodies. The chain is Caltractin ICL1c (Icl1c) from Paramecium tetraurelia.